The sequence spans 267 residues: Serine acetyltransferase (267 aa).

The protein belongs to the transferase hexapeptide repeat family.

The protein localises to the cytoplasm. It catalyses the reaction L-serine + acetyl-CoA = O-acetyl-L-serine + CoA. It functions in the pathway amino-acid biosynthesis; L-cysteine biosynthesis; L-cysteine from L-serine: step 1/2. This Haemophilus influenzae (strain ATCC 51907 / DSM 11121 / KW20 / Rd) protein is Serine acetyltransferase (cysE).